Consider the following 89-residue polypeptide: Cell division topological specificity factor (89 aa).

The protein belongs to the MinE family.

Functionally, prevents the cell division inhibition by proteins MinC and MinD at internal division sites while permitting inhibition at polar sites. This ensures cell division at the proper site by restricting the formation of a division septum at the midpoint of the long axis of the cell. This Photorhabdus laumondii subsp. laumondii (strain DSM 15139 / CIP 105565 / TT01) (Photorhabdus luminescens subsp. laumondii) protein is Cell division topological specificity factor.